The following is a 362-amino-acid chain: Peptide chain release factor 1 (362 aa).

Gln-237 carries the post-translational modification N5-methylglutamine.

Belongs to the prokaryotic/mitochondrial release factor family. Methylated by PrmC. Methylation increases the termination efficiency of RF1.

It is found in the cytoplasm. Peptide chain release factor 1 directs the termination of translation in response to the peptide chain termination codons UAG and UAA. This Marinomonas sp. (strain MWYL1) protein is Peptide chain release factor 1.